The following is a 745-amino-acid chain: 1,4-alpha-glucan branching enzyme GlgB (745 aa).

Residue D416 is the Nucleophile of the active site. E469 functions as the Proton donor in the catalytic mechanism.

It belongs to the glycosyl hydrolase 13 family. GlgB subfamily. As to quaternary structure, monomer.

It catalyses the reaction Transfers a segment of a (1-&gt;4)-alpha-D-glucan chain to a primary hydroxy group in a similar glucan chain.. It participates in glycan biosynthesis; glycogen biosynthesis. Its function is as follows. Catalyzes the formation of the alpha-1,6-glucosidic linkages in glycogen by scission of a 1,4-alpha-linked oligosaccharide from growing alpha-1,4-glucan chains and the subsequent attachment of the oligosaccharide to the alpha-1,6 position. This is 1,4-alpha-glucan branching enzyme GlgB from Shewanella sp. (strain MR-4).